The primary structure comprises 177 residues: Interleukin-1 receptor antagonist protein (177 aa).

A signal peptide spans 1–25; it reads MEICRGLRSHLITLLLFLFHSETIC. A disulfide bridge connects residues Cys91 and Cys141. A glycan (N-linked (GlcNAc...) asparagine) is linked at Asn109.

Belongs to the IL-1 family. As to expression, the intracellular form of IL1RN is predominantly expressed in epithelial cells.

Its subcellular location is the secreted. It localises to the cytoplasm. Anti-inflammatory antagonist of interleukin-1 family of proinflammatory cytokines such as interleukin-1beta/IL1B and interleukin-1alpha/IL1A. Protects from immune dysregulation and uncontrolled systemic inflammation triggered by IL1 for a range of innate stimulatory agents such as pathogens. This Homo sapiens (Human) protein is Interleukin-1 receptor antagonist protein (IL1RN).